We begin with the raw amino-acid sequence, 467 residues long: ATP synthase subunit beta, sodium ion specific (467 aa).

151-158 (GGAGVGKT) provides a ligand contact to ATP.

It belongs to the ATPase alpha/beta chains family. As to quaternary structure, F-type ATPases have 2 components, CF(1) - the catalytic core - and CF(0) - the membrane proton channel. CF(1) has five subunits: alpha(3), beta(3), gamma(1), delta(1), epsilon(1). CF(0) has three main subunits: a, b and c.

The protein resides in the cell membrane. It catalyses the reaction 4 Na(+)(in) + ATP + H2O = 4 Na(+)(out) + ADP + phosphate + H(+). Produces ATP from ADP in the presence of a sodium ion gradient across the membrane. The beta chain is the catalytic subunit. The sequence is that of ATP synthase subunit beta, sodium ion specific from Propionigenium modestum.